Here is a 492-residue protein sequence, read N- to C-terminus: Probable serine/threonine-protein kinase WNK9 (492 aa).

A Protein kinase domain is found at 25–282; the sequence is GRYNEVLGKG…ACELLDDHFL (258 aa). Residues 105–108 and K155 contribute to the ATP site; that span reads TEMF. Catalysis depends on D172, which acts as the Proton acceptor.

Belongs to the protein kinase superfamily. Ser/Thr protein kinase family. WNK subfamily.

The enzyme catalyses L-seryl-[protein] + ATP = O-phospho-L-seryl-[protein] + ADP + H(+). The catalysed reaction is L-threonyl-[protein] + ATP = O-phospho-L-threonyl-[protein] + ADP + H(+). May regulate flowering time by modulating the photoperiod pathway. This chain is Probable serine/threonine-protein kinase WNK9 (WNK9), found in Arabidopsis thaliana (Mouse-ear cress).